The primary structure comprises 300 residues: MTEVVMFRGSMVAMVTPMKAQDGIRDAVDEKALKQLVEYHVEQGSDAIVAVGTTGESATLDYEEHRDVIRATVEAAAGRIPVIGGTGANSTWEAIELTRSAMEAGCDAALLVVPYYNKPTQEGLVQHFSAIAEAVPIPQILYNVPGRTGCDMLPETVERLADLPNVVGLKEAQGTVERAEEVIRRCGDRLDVFAGDDFNALGMMRVGGKGVISVSANVVPRQMHDLCAAALAGDMQTAEAINERLTPLHQAMFCEPNPVPVKWAVEELGMAGSGMRLPMTRLTEAGQARVRQAMQDAGLL.

Residue Thr54 coordinates pyruvate. Tyr142 acts as the Proton donor/acceptor in catalysis. The active-site Schiff-base intermediate with substrate is the Lys170. Residue Ile212 participates in pyruvate binding.

This sequence belongs to the DapA family. As to quaternary structure, homotetramer; dimer of dimers.

Its subcellular location is the cytoplasm. It catalyses the reaction L-aspartate 4-semialdehyde + pyruvate = (2S,4S)-4-hydroxy-2,3,4,5-tetrahydrodipicolinate + H2O + H(+). The protein operates within amino-acid biosynthesis; L-lysine biosynthesis via DAP pathway; (S)-tetrahydrodipicolinate from L-aspartate: step 3/4. Functionally, catalyzes the condensation of (S)-aspartate-beta-semialdehyde [(S)-ASA] and pyruvate to 4-hydroxy-tetrahydrodipicolinate (HTPA). In Halorhodospira halophila (strain DSM 244 / SL1) (Ectothiorhodospira halophila (strain DSM 244 / SL1)), this protein is 4-hydroxy-tetrahydrodipicolinate synthase.